The chain runs to 291 residues: MAEQKKQLLIVTGMSGAGKTVAIKALEDMGYFVVDNLPPELLGSFWELINNSSDFSKAAVVVDLRVKSFYKDLVDEIKSLEDSQNVQSTVLFLDASDDVLVSRYKETRRLPPLAHTGRLLDGIQEERAILSRTKNISNIIIDTSRLTTKELKAKLVDKFGDNQTRTFSIEVMSFGFKYGIPIDADIVMDVRFLPNPFYIPQLKPFTGLDRRVFDYVMSKKETKKFYAKFLDMLETAIPGYIAEGKEKLTIAIGCTGGQHRSVSIARQLAVDLAKKYPVDISHREISRYIGQ.

13–20 (GMSGAGKT) provides a ligand contact to ATP. 63–66 (DLRV) serves as a coordination point for GTP.

Belongs to the RapZ-like family.

In terms of biological role, displays ATPase and GTPase activities. The sequence is that of Nucleotide-binding protein LGAS_1315 from Lactobacillus gasseri (strain ATCC 33323 / DSM 20243 / BCRC 14619 / CIP 102991 / JCM 1131 / KCTC 3163 / NCIMB 11718 / NCTC 13722 / AM63).